A 311-amino-acid polypeptide reads, in one-letter code: Probable manganese-dependent inorganic pyrophosphatase (311 aa).

Positions 9, 13, 15, 77, 99, and 151 each coordinate Mn(2+).

The protein belongs to the PPase class C family. Mn(2+) serves as cofactor.

The protein resides in the cytoplasm. The catalysed reaction is diphosphate + H2O = 2 phosphate + H(+). This Streptococcus equi subsp. zooepidemicus (strain H70) protein is Probable manganese-dependent inorganic pyrophosphatase.